The following is a 1058-amino-acid chain: Leucine-rich repeat and coiled-coil domain-containing protein PF3D7_0703800 (1058 aa).

Over residues 1–10 (MAIKKKKKET) the composition is skewed to basic residues. Residues 1–34 (MAIKKKKKETKSKDNNNDNLRNEKKSTNLENGKY) are disordered. Over residues 11 to 34 (KSKDNNNDNLRNEKKSTNLENGKY) the composition is skewed to basic and acidic residues. A coiled-coil region spans residues 515–544 (LKQLYTFIKNYENNNDKLNIKSQIINKDKN). Residues 641–661 (ENKDHLQHEEHTHEEEPKDAN) are compositionally biased toward basic and acidic residues. 2 disordered regions span residues 641–665 (ENKD…GDMV) and 706–728 (NIED…ENMK). A coiled-coil region spans residues 872–905 (NYDHTQENILKNKNNMEDQNNLLEQNIMTDQLQN).

This is Leucine-rich repeat and coiled-coil domain-containing protein PF3D7_0703800 from Plasmodium falciparum (isolate 3D7).